We begin with the raw amino-acid sequence, 310 residues long: MGALGLQGRGGRPQGTGCLLLAVAGATSLVTLLLAVPITVLAVLALVPQEQGGLVMESAGLGAQAQQGLSKSNGLPSRLHSQIPSSSKNPFLRPGALSSHGKHPWVATLPPIVASTPVPGFQQLQEEKPETDLSSRLPAAHLIGAWMKGQGLSWEAKKEEAFLRSGTQFSGAEGLALPQDGLYYLYCNVGYRGRAPPSGAGPQDRSVTLRSSLYRAGGAYGRGAPELLLEGAETVTPVLDRAGRPQYRPLWYTSVGFGGLVQLRRGERVYVNISHPDMVDYRRGKTFFGAVMVGLVPSASLGKCLHSANV.

The Cytoplasmic segment spans residues 1-27 (MGALGLQGRGGRPQGTGCLLLAVAGAT). Residues 28–48 (SLVTLLLAVPITVLAVLALVP) traverse the membrane as a helical; Signal-anchor for type II membrane protein segment. The Extracellular segment spans residues 49 to 310 (QEQGGLVMES…LGKCLHSANV (262 aa)). The interval 67–86 (QGLSKSNGLPSRLHSQIPSS) is disordered. The THD domain occupies 138-293 (PAAHLIGAWM…GKTFFGAVMV (156 aa)). N272 is a glycosylation site (N-linked (GlcNAc...) asparagine).

This sequence belongs to the tumor necrosis factor family. As to quaternary structure, heterotrimer of either two LTB and one LTA subunits or (less prevalent) two LTA and one LTB subunits.

The protein localises to the membrane. Functionally, cytokine that binds to LTBR/TNFRSF3. May play a specific role in immune response regulation. Provides the membrane anchor for the attachment of the heterotrimeric complex to the cell surface. In Marmota monax (Woodchuck), this protein is Lymphotoxin-beta (LTB).